A 204-amino-acid polypeptide reads, in one-letter code: Small ribosomal subunit protein eS8 (204 aa).

This sequence belongs to the eukaryotic ribosomal protein eS8 family.

This Griffithsia japonica (Red alga) protein is Small ribosomal subunit protein eS8 (RPS8).